The primary structure comprises 518 residues: U-box domain-containing protein 57 (518 aa).

A coiled-coil region spans residues Glu86–His142. One can recognise a Protein kinase domain in the interval Phe159 to Ile409. In terms of domain architecture, U-box spans Ser434–Asn508.

It carries out the reaction S-ubiquitinyl-[E2 ubiquitin-conjugating enzyme]-L-cysteine + [acceptor protein]-L-lysine = [E2 ubiquitin-conjugating enzyme]-L-cysteine + N(6)-ubiquitinyl-[acceptor protein]-L-lysine.. It functions in the pathway protein modification; protein ubiquitination. Its function is as follows. Possesses E3 ubiquitin-protein ligase in vitro. May be involved in cell death signaling. The chain is U-box domain-containing protein 57 (PUB57) from Oryza sativa subsp. japonica (Rice).